A 358-amino-acid polypeptide reads, in one-letter code: Phospho-N-acetylmuramoyl-pentapeptide-transferase (358 aa).

The next 10 helical transmembrane spans lie at 24–44, 73–93, 95–115, 134–154, 169–189, 197–217, 233–253, 261–281, 286–306, and 335–355; these read FRSIYAMITALLLAFIVGPWV, TMGGVLILVCIVLPTLLWADL, NVFIWLTLLIIVGYGVLGFVD, MFWQMLLAAGVGIFLFYLPGF, ELGILFIPFVMLVIVGASNAV, GLAIGPVAINAATYLLFCYIA, GAGELAVLCGAMVGAGLGFLW, VFMGDVGSLSLGGALGTLAVL, ILLVIVGGVFVVEALSVIFQV, and KIIVRFWIITIILALVAISTL.

Belongs to the glycosyltransferase 4 family. MraY subfamily. The cofactor is Mg(2+).

It localises to the cell inner membrane. The enzyme catalyses UDP-N-acetyl-alpha-D-muramoyl-L-alanyl-gamma-D-glutamyl-meso-2,6-diaminopimeloyl-D-alanyl-D-alanine + di-trans,octa-cis-undecaprenyl phosphate = di-trans,octa-cis-undecaprenyl diphospho-N-acetyl-alpha-D-muramoyl-L-alanyl-D-glutamyl-meso-2,6-diaminopimeloyl-D-alanyl-D-alanine + UMP. The protein operates within cell wall biogenesis; peptidoglycan biosynthesis. Its function is as follows. Catalyzes the initial step of the lipid cycle reactions in the biosynthesis of the cell wall peptidoglycan: transfers peptidoglycan precursor phospho-MurNAc-pentapeptide from UDP-MurNAc-pentapeptide onto the lipid carrier undecaprenyl phosphate, yielding undecaprenyl-pyrophosphoryl-MurNAc-pentapeptide, known as lipid I. This chain is Phospho-N-acetylmuramoyl-pentapeptide-transferase, found in Citrifermentans bemidjiense (strain ATCC BAA-1014 / DSM 16622 / JCM 12645 / Bem) (Geobacter bemidjiensis).